Reading from the N-terminus, the 70-residue chain is Cold shock-like protein (70 aa).

Residues 5-65 (GTVKWFSKDK…DTKGPRAKNV (61 aa)) enclose the CSD domain.

The protein resides in the cytoplasm. This Aquifex aeolicus (strain VF5) protein is Cold shock-like protein (csp).